Consider the following 378-residue polypeptide: Erythronate-4-phosphate dehydrogenase (378 aa).

2 residues coordinate substrate: S45 and T66. NAD(+) is bound by residues D146 and T175. R208 is a catalytic residue. D232 contacts NAD(+). Residue E237 is part of the active site. Catalysis depends on H254, which acts as the Proton donor. An NAD(+)-binding site is contributed by G257. Y258 lines the substrate pocket.

Belongs to the D-isomer specific 2-hydroxyacid dehydrogenase family. PdxB subfamily. In terms of assembly, homodimer.

Its subcellular location is the cytoplasm. The enzyme catalyses 4-phospho-D-erythronate + NAD(+) = (R)-3-hydroxy-2-oxo-4-phosphooxybutanoate + NADH + H(+). The protein operates within cofactor biosynthesis; pyridoxine 5'-phosphate biosynthesis; pyridoxine 5'-phosphate from D-erythrose 4-phosphate: step 2/5. Catalyzes the oxidation of erythronate-4-phosphate to 3-hydroxy-2-oxo-4-phosphonooxybutanoate. The chain is Erythronate-4-phosphate dehydrogenase from Pectobacterium atrosepticum (strain SCRI 1043 / ATCC BAA-672) (Erwinia carotovora subsp. atroseptica).